The sequence spans 205 residues: dTTP/UTP pyrophosphatase (205 aa).

Asp-81 functions as the Proton acceptor in the catalytic mechanism.

The protein belongs to the Maf family. YhdE subfamily. A divalent metal cation is required as a cofactor.

It localises to the cytoplasm. The enzyme catalyses dTTP + H2O = dTMP + diphosphate + H(+). The catalysed reaction is UTP + H2O = UMP + diphosphate + H(+). Functionally, nucleoside triphosphate pyrophosphatase that hydrolyzes dTTP and UTP. May have a dual role in cell division arrest and in preventing the incorporation of modified nucleotides into cellular nucleic acids. In Agathobacter rectalis (strain ATCC 33656 / DSM 3377 / JCM 17463 / KCTC 5835 / VPI 0990) (Eubacterium rectale), this protein is dTTP/UTP pyrophosphatase.